The chain runs to 348 residues: Erythronate-4-phosphate dehydrogenase (348 aa).

Positions 46 and 67 each coordinate substrate. Aspartate 147 serves as a coordination point for NAD(+). Arginine 209 is a catalytic residue. Aspartate 233 is a binding site for NAD(+). Glutamate 238 is an active-site residue. Residue histidine 255 is the Proton donor of the active site. Glycine 258 serves as a coordination point for NAD(+). Tyrosine 259 lines the substrate pocket.

It belongs to the D-isomer specific 2-hydroxyacid dehydrogenase family. PdxB subfamily. Homodimer.

Its subcellular location is the cytoplasm. The enzyme catalyses 4-phospho-D-erythronate + NAD(+) = (R)-3-hydroxy-2-oxo-4-phosphooxybutanoate + NADH + H(+). Its pathway is cofactor biosynthesis; pyridoxine 5'-phosphate biosynthesis; pyridoxine 5'-phosphate from D-erythrose 4-phosphate: step 2/5. Functionally, catalyzes the oxidation of erythronate-4-phosphate to 3-hydroxy-2-oxo-4-phosphonooxybutanoate. The polypeptide is Erythronate-4-phosphate dehydrogenase (Bacteroides thetaiotaomicron (strain ATCC 29148 / DSM 2079 / JCM 5827 / CCUG 10774 / NCTC 10582 / VPI-5482 / E50)).